Here is a 241-residue protein sequence, read N- to C-terminus: Zinc finger CCHC domain-containing protein 17 (241 aa).

In terms of domain architecture, S1 motif spans 16-88 (YTIFQGEVAM…DRIKVSLSMK (73 aa)). Position 114 is a phosphoserine (Ser-114). The CCHC-type zinc finger occupies 131 to 148 (TTCKKCGCKGHFAKDCFM). Lys-144 is modified (N6-acetyllysine). The segment at 160 to 241 (EEEEEKEEAK…KKKHKKKHKE (82 aa)) is disordered. The span at 166–178 (EEAKAEGLEKPDP) shows a compositional bias: basic and acidic residues. Residues 182 to 198 (SSRKRKKEKKKKKHRDR) are compositionally biased toward basic residues. Position 183 is a phosphoserine (Ser-183). The span at 211–225 (DTGKKARHSSKDSKA) shows a compositional bias: basic and acidic residues. The span at 226-241 (TKKKKKKKKHKKKHKE) shows a compositional bias: basic residues.

In terms of assembly, interacts with PNN. Associates with the 60S ribosomal subunit. As to expression, expressed in liver, brain, heart, kidney testis, stomach, small intestine, skin, thymus, uterus, placenta, spleen, lung and skeletal muscle.

It is found in the nucleus. It localises to the nucleolus. This chain is Zinc finger CCHC domain-containing protein 17 (Zcchc17), found in Mus musculus (Mouse).